Consider the following 150-residue polypeptide: Protein ORF35 (150 aa).

The chain is Protein ORF35 (ORF35) from Homo sapiens (Human).